A 320-amino-acid chain; its full sequence is tRNA pseudouridine synthase B (320 aa).

Asp-48 functions as the Nucleophile in the catalytic mechanism.

Belongs to the pseudouridine synthase TruB family. Type 1 subfamily.

The enzyme catalyses uridine(55) in tRNA = pseudouridine(55) in tRNA. In terms of biological role, responsible for synthesis of pseudouridine from uracil-55 in the psi GC loop of transfer RNAs. This is tRNA pseudouridine synthase B from Mycobacterium leprae (strain TN).